The sequence spans 193 residues: MARARQEGSSPEPVEGLARDSPRPFPLGRLMPSAVSCGLCEPGLPAAPAAPALLPAAYLCAPTAPPAVTAALGGPRWPGGHRSRPRGPRPDGPQPSLSPAQQHLESPVPSAPEALAGGPTQAAPGVRVEEEEWAREIGAQLRRMADDLNAQYERRRQEEQHRHRPSPWRVMYNLFMGLLPLPRDPGAPEMEPN.

Disordered stretches follow at residues 1–32 (MARARQEGSSPEPVEGLARDSPRPFPLGRLMP) and 71–131 (ALGG…VEEE). The residue at position 10 (Ser-10) is a Phosphoserine. Positions 137–151 (IGAQLRRMADDLNAQ) match the BH3 motif.

This sequence belongs to the Bcl-2 family. Interacts with MCL1 and BCL2A1. Interacts (via BH3 domain) with BCL2 and BCL2L1/BCL-XL. Interacts (via BH3 domain) with NOL3/ARC (via CARD domain); this interaction prevents BBC3 association with BCL2 and results in CASP8 activation.

It localises to the mitochondrion. Essential mediator of p53/TP53-dependent and p53/TP53-independent apoptosis. Promotes partial unfolding of BCL2L1 and dissociation of BCL2L1 from p53/TP53, releasing the bound p53/TP53 to induce apoptosis. Regulates ER stress-induced neuronal apoptosis. The chain is Bcl-2-binding component 3 (Bbc3) from Rattus norvegicus (Rat).